A 168-amino-acid polypeptide reads, in one-letter code: 6,7-dimethyl-8-ribityllumazine synthase (168 aa).

Residues Phe-24, 58–60 (ALE), and 82–84 (AVI) each bind 5-amino-6-(D-ribitylamino)uracil. 87–88 (ET) is a binding site for (2S)-2-hydroxy-3-oxobutyl phosphate. His-90 functions as the Proton donor in the catalytic mechanism. Position 115 (Asn-115) interacts with 5-amino-6-(D-ribitylamino)uracil. Position 129 (Arg-129) interacts with (2S)-2-hydroxy-3-oxobutyl phosphate.

This sequence belongs to the DMRL synthase family.

It catalyses the reaction (2S)-2-hydroxy-3-oxobutyl phosphate + 5-amino-6-(D-ribitylamino)uracil = 6,7-dimethyl-8-(1-D-ribityl)lumazine + phosphate + 2 H2O + H(+). It participates in cofactor biosynthesis; riboflavin biosynthesis; riboflavin from 2-hydroxy-3-oxobutyl phosphate and 5-amino-6-(D-ribitylamino)uracil: step 1/2. Functionally, catalyzes the formation of 6,7-dimethyl-8-ribityllumazine by condensation of 5-amino-6-(D-ribitylamino)uracil with 3,4-dihydroxy-2-butanone 4-phosphate. This is the penultimate step in the biosynthesis of riboflavin. In Paraburkholderia phytofirmans (strain DSM 17436 / LMG 22146 / PsJN) (Burkholderia phytofirmans), this protein is 6,7-dimethyl-8-ribityllumazine synthase.